The following is an 878-amino-acid chain: Aconitate hydratase A (878 aa).

3 residues coordinate [4Fe-4S] cluster: cysteine 426, cysteine 492, and cysteine 495.

The protein belongs to the aconitase/IPM isomerase family. In terms of assembly, monomer. [4Fe-4S] cluster serves as cofactor.

It carries out the reaction citrate = D-threo-isocitrate. It catalyses the reaction (2S,3R)-3-hydroxybutane-1,2,3-tricarboxylate = 2-methyl-cis-aconitate + H2O. It functions in the pathway carbohydrate metabolism; tricarboxylic acid cycle; isocitrate from oxaloacetate: step 2/2. It participates in organic acid metabolism; propanoate degradation. Its function is as follows. Involved in the catabolism of short chain fatty acids (SCFA) via the tricarboxylic acid (TCA)(acetyl degradation route) and probably the 2-methylcitrate cycle I (propionate degradation route). Catalyzes the reversible isomerization of citrate to isocitrate via cis-aconitate. Could catalyze the hydration of 2-methyl-cis-aconitate to yield (2R,3S)-2-methylisocitrate. The apo form of AcnA functions as a RNA-binding regulatory protein. This chain is Aconitate hydratase A (acnA), found in Rickettsia prowazekii (strain Madrid E).